A 450-amino-acid polypeptide reads, in one-letter code: Glucose-6-phosphate isomerase (450 aa).

Catalysis depends on E291, which acts as the Proton donor. Catalysis depends on residues H312 and K426.

The protein belongs to the GPI family.

Its subcellular location is the cytoplasm. It carries out the reaction alpha-D-glucose 6-phosphate = beta-D-fructose 6-phosphate. Its pathway is carbohydrate biosynthesis; gluconeogenesis. The protein operates within carbohydrate degradation; glycolysis; D-glyceraldehyde 3-phosphate and glycerone phosphate from D-glucose: step 2/4. Functionally, catalyzes the reversible isomerization of glucose-6-phosphate to fructose-6-phosphate. This is Glucose-6-phosphate isomerase from Clostridium perfringens (strain ATCC 13124 / DSM 756 / JCM 1290 / NCIMB 6125 / NCTC 8237 / Type A).